The sequence spans 369 residues: Core histone macro-H2A.1 (369 aa).

2 positions are modified to N6-lactoyllysine; alternate: Lys7 and Lys9. A Histone H2A domain is found at Arg15 to Glu90. Lys18 carries the N6-methyllysine modification. Lys116 carries the post-translational modification N6-acetyllysine; alternate. Lys116 participates in a covalent cross-link: Glycyl lysine isopeptide (Lys-Gly) (interchain with G-Cter in ubiquitin); alternate. A Glycyl lysine isopeptide (Lys-Gly) (interchain with G-Cter in ubiquitin) cross-link involves residue Lys117. Lys123 carries the post-translational modification N6-acetyllysine; alternate. Lys123 bears the N6,N6-dimethyllysine; alternate mark. A Glycyl lysine isopeptide (Lys-Gly) (interchain with G-Cter in SUMO2); alternate cross-link involves residue Lys123. Residues Ile128 to Ala180 are disordered. Thr129 bears the Phosphothreonine mark. Positions Thr144–Lys160 are enriched in basic residues. Polar residues predominate over residues Val165 to Gly177. Lys167 participates in a covalent cross-link: Glycyl lysine isopeptide (Lys-Gly) (interchain with G-Cter in SUMO2). Phosphoserine is present on residues Ser170 and Ser173. Thr178 carries the post-translational modification Phosphothreonine. Residues Thr184–Asp367 enclose the Macro domain. Lys189 participates in a covalent cross-link: Glycyl lysine isopeptide (Lys-Gly) (interchain with G-Cter in SUMO2). Residues Asp203, Ile204, Val226, Ser275, Gly312, Ser313, Gly314, and Asn316 each coordinate a glycoprotein. Lys320 is covalently cross-linked (Glycyl lysine isopeptide (Lys-Gly) (interchain with G-Cter in SUMO2)).

It belongs to the histone H2A family. As to quaternary structure, the nucleosome is a histone octamer containing two molecules each of H2A, H2B, H3 and H4 assembled in one H3-H4 heterotetramer and two H2A-H2B heterodimers. In terms of processing, ADP-ribosylated. Post-translationally, monoubiquitinated at either Lys-116 or Lys-117. May also be polyubiquitinated. Ubiquitination is mediated by the CUL3/SPOP E3 complex and does not promote proteasomal degradation. Instead, it is required for enrichment in inactive X chromosome chromatin. In terms of tissue distribution, present in liver (at protein level).

It localises to the nucleus. The protein resides in the chromosome. Its function is as follows. Variant histone H2A which replaces conventional H2A in a subset of nucleosomes where it represses transcription. Nucleosomes wrap and compact DNA into chromatin, limiting DNA accessibility to the cellular machineries which require DNA as a template. Histones thereby play a central role in transcription regulation, DNA repair, DNA replication and chromosomal stability. DNA accessibility is regulated via a complex set of post-translational modifications of histones, also called histone code, and nucleosome remodeling. Functionally, isoform that specifically binds poly-ADP-ribose and O-acetyl-ADP-ribose and plays a key role in NAD(+) metabolism. Able to bind to the ends of poly-ADP-ribose chains created by PARP1 and cap them. This prevents PARP1 from further addition of ADP-ribose and thus limits the consumption of nuclear NAD(+), allowing the cell to maintain proper NAD(+) levels in both the nucleus and the mitochondria to promote proper mitochondrial respiration. In terms of biological role, in contrast to isoform 1, does not bind poly-ADP-ribose. The sequence is that of Core histone macro-H2A.1 from Gallus gallus (Chicken).